A 92-amino-acid chain; its full sequence is Putative defensin-like protein 225 (92 aa).

An N-terminal signal peptide occupies residues 1–26 (MKYGVLFMVSCGVMFLILSHVEEVEA). 3 cysteine pairs are disulfide-bonded: cysteine 32-cysteine 92, cysteine 42-cysteine 70, and cysteine 68-cysteine 88.

Belongs to the DEFL family.

The protein localises to the secreted. This chain is Putative defensin-like protein 225 (SCRL1), found in Arabidopsis thaliana (Mouse-ear cress).